The sequence spans 364 residues: MGILEKISEIEKEIARTQKNKATEYHLGLLKAKLAKYRAQLLEPSKSASSKGEGFDVMKSGDARVALIGFPSVGKSTFLSLMTSTASEAASYEFTTLTCIPGVIEYKGANIQLLDLPGIIEGAAQGKGRGRQVIAVARTADVIIMMLDATKGEVQRSLLEKELESVGIRLNKHKPNIYFKPKKGGGISFNSTVTLTQCSEKLVQLILHEYKIFNAEVLFREDCSPDEFIDVIVGNRVYMPCLYVYNKIDQISMEEVDRLARKPNSVVISCGMKLNLDYLLEMLWEYLALTCIYTKKRGQRPDFTDAIILRKGASVEHVCHRIHRSLASQFKYALVWGTSTKYSPQRVGLTHTMEHEDVIQIVKK.

K21 carries the post-translational modification (3S)-3-hydroxylysine. Residues 63-288 (ARVALIGFPS…LLEMLWEYLA (226 aa)) form the OBG-type G domain. Residues 69–76 (GFPSVGKS), 94–98 (FTTLT), 115–118 (DLPG), 246–249 (NKID), and 269–271 (SCG) each bind GTP. 2 residues coordinate Mg(2+): S76 and T96. One can recognise a TGS domain in the interval 288–363 (ALTCIYTKKR…EHEDVIQIVK (76 aa)).

It belongs to the TRAFAC class OBG-HflX-like GTPase superfamily. OBG GTPase family. As to quaternary structure, interacts with RWDD1; this interaction confers protection to polyubiquitination and proteolytic degradation. Interacts with JMJD7; this interaction is direct. Requires Mg(2+) as cofactor. Post-translationally, hydroxylated (with S stereochemistry) at C-3 of Lys-21 by JMJD7; this modification hinders trypsin-catalyzed proteolysis in vitro. Polyubiquitinated. In terms of tissue distribution, highest levels in skeletal muscle, heart and kidney. Low levels in colon, thymus, spleen, small intestine, lung and Leukocytes.

Its subcellular location is the nucleus. The protein resides in the cytoplasm. It carries out the reaction GTP + H2O = GDP + phosphate + H(+). Catalyzes the conversion of GTP to GDP through hydrolysis of the gamma-phosphate bond in GTP. When hydroxylated at C-3 of 'Lys-21' by JMJD7, may bind to RNA and play a role in translation. The sequence is that of Developmentally-regulated GTP-binding protein 2 from Homo sapiens (Human).